A 110-amino-acid chain; its full sequence is UPF0060 membrane protein Psyr_3752 (110 aa).

4 helical membrane passes run 5-25 (LWFFLAALFEIFGCYAFWLWL), 28-48 (GKSALWVIPALVSLTVFALLL), 59-79 (AYAAYGGIYIVASIAWLGLVE), and 84-104 (LGTDWLGLAFCVIGATIILLG).

Belongs to the UPF0060 family.

Its subcellular location is the cell inner membrane. The polypeptide is UPF0060 membrane protein Psyr_3752 (Pseudomonas syringae pv. syringae (strain B728a)).